Here is a 185-residue protein sequence, read N- to C-terminus: UPF0397 protein CPF_1836 (185 aa).

The next 5 helical transmembrane spans lie at 11–31 (IVAI…GSLP), 44–64 (AFLA…IGFI), 71–91 (IVFF…VGLI), 111–131 (IFMF…LVAP), and 149–169 (GVIG…ILIA).

This sequence belongs to the UPF0397 family.

The protein localises to the cell membrane. This is UPF0397 protein CPF_1836 from Clostridium perfringens (strain ATCC 13124 / DSM 756 / JCM 1290 / NCIMB 6125 / NCTC 8237 / Type A).